Consider the following 205-residue polypeptide: MIMKSSNVVWHKSTVTRQNRQEQNGHLSTILWFTGLSGAGKSTLAHTVEDALSKMNCRTFVIDGDNIRHGLCADLGFSSEDRVENIRRIGEVAKLFTEAGIIVLSAFISPFRADRDRVRELVPEGDFIEIYCQASLEVCEERDVKGLYKKARSGEIPNFTGISSPYEPPEEPEIIVKTGEDSLEVCAQQVIEFLQERGIVQPTSA.

Residue G35–S42 participates in ATP binding. Catalysis depends on S109, which acts as the Phosphoserine intermediate.

It belongs to the APS kinase family.

It carries out the reaction adenosine 5'-phosphosulfate + ATP = 3'-phosphoadenylyl sulfate + ADP + H(+). It functions in the pathway sulfur metabolism; hydrogen sulfide biosynthesis; sulfite from sulfate: step 2/3. Its function is as follows. Catalyzes the synthesis of activated sulfate. The sequence is that of Adenylyl-sulfate kinase from Acaryochloris marina (strain MBIC 11017).